The sequence spans 97 residues: Secreted Ly-6/uPAR domain-containing protein 2 (97 aa).

The signal sequence occupies residues methionine 1–alanine 22. Positions leucine 23–asparagine 95 constitute a UPAR/Ly6 domain. Disulfide bonds link cysteine 25/cysteine 47, cysteine 28/cysteine 34, cysteine 40/cysteine 68, cysteine 72/cysteine 88, and cysteine 89/cysteine 94.

Interacts with CHRNA3, CHRNA4, CHRNA5, CHRNA7, CHRNB2 and CHRNB4. Interacts with CHRM1 and CHRM3 probably in an allosteric manner.

Its subcellular location is the secreted. In terms of biological role, binds and may modulate the functional properties of nicotinic and muscarinic acetylcholine receptors. May regulate keratinocytes proliferation, differentiation and apoptosis. In vitro moderately inhibits ACh-evoked currents of alpha-3:beta-2-containing nAChRs, strongly these of alpha-4:beta-2-containing nAChRs, modulates alpha-7-containing nAChRs, and inhibits nicotine-induced signaling probably implicating alpha-3:beta-4-containing nAChRs. Proposed to act on alpha-3:beta-2 and alpha-7 nAChRs in an orthosteric, and on mAChRs, such as CHRM1 and CHRM3, in an allosteric manner. In Macaca mulatta (Rhesus macaque), this protein is Secreted Ly-6/uPAR domain-containing protein 2.